We begin with the raw amino-acid sequence, 872 residues long: Alanine--tRNA ligase (872 aa).

Residues histidine 558, histidine 562, cysteine 660, and histidine 664 each contribute to the Zn(2+) site.

This sequence belongs to the class-II aminoacyl-tRNA synthetase family. The cofactor is Zn(2+).

The protein resides in the cytoplasm. It carries out the reaction tRNA(Ala) + L-alanine + ATP = L-alanyl-tRNA(Ala) + AMP + diphosphate. Its function is as follows. Catalyzes the attachment of alanine to tRNA(Ala) in a two-step reaction: alanine is first activated by ATP to form Ala-AMP and then transferred to the acceptor end of tRNA(Ala). Also edits incorrectly charged Ser-tRNA(Ala) and Gly-tRNA(Ala) via its editing domain. The sequence is that of Alanine--tRNA ligase from Chlamydia pneumoniae (Chlamydophila pneumoniae).